The primary structure comprises 417 residues: NADH-quinone oxidoreductase subunit D (417 aa).

This sequence belongs to the complex I 49 kDa subunit family. NDH-1 is composed of 14 different subunits. Subunits NuoB, C, D, E, F, and G constitute the peripheral sector of the complex.

The protein localises to the cell inner membrane. It carries out the reaction a quinone + NADH + 5 H(+)(in) = a quinol + NAD(+) + 4 H(+)(out). In terms of biological role, NDH-1 shuttles electrons from NADH, via FMN and iron-sulfur (Fe-S) centers, to quinones in the respiratory chain. The immediate electron acceptor for the enzyme in this species is believed to be ubiquinone. Couples the redox reaction to proton translocation (for every two electrons transferred, four hydrogen ions are translocated across the cytoplasmic membrane), and thus conserves the redox energy in a proton gradient. The sequence is that of NADH-quinone oxidoreductase subunit D from Paracidovorax citrulli (strain AAC00-1) (Acidovorax citrulli).